Consider the following 743-residue polypeptide: Cytosolic neutral trehalase (743 aa).

Positions 95, 97, 99, 101, and 106 each coordinate Ca(2+). Residues arginine 285, 292–293 (WD), asparagine 329, 338–340 (RSQ), glutamate 405, arginine 454, and glycine 457 each bind substrate. Active-site proton donor/acceptor residues include aspartate 459 and glutamate 664.

The protein belongs to the glycosyl hydrolase 37 family. It depends on Ca(2+) as a cofactor.

It is found in the cytoplasm. The enzyme catalyses alpha,alpha-trehalose + H2O = alpha-D-glucose + beta-D-glucose. Its pathway is carbohydrate degradation. Hydrolyzes intracellular trehalose to glucose. The protein is Cytosolic neutral trehalase of Beauveria bassiana (strain ARSEF 2860) (White muscardine disease fungus).